The sequence spans 132 residues: Small ribosomal subunit protein eS12 (132 aa).

This sequence belongs to the eukaryotic ribosomal protein eS12 family.

Its subcellular location is the cytoplasm. In Xenopus laevis (African clawed frog), this protein is Small ribosomal subunit protein eS12 (rps12).